The sequence spans 285 residues: Acetyl-coenzyme A carboxylase carboxyl transferase subunit beta (285 aa).

The 264-residue stretch at 22–285 (LWTKCEACGA…HPGVAYAPGV (264 aa)) folds into the CoA carboxyltransferase N-terminal domain. The Zn(2+) site is built by Cys-26, Cys-29, Cys-45, and Cys-48. The C4-type zinc finger occupies 26 to 48 (CEACGAQIYKKEFQENLHVCPKC).

It belongs to the AccD/PCCB family. As to quaternary structure, acetyl-CoA carboxylase is a heterohexamer composed of biotin carboxyl carrier protein (AccB), biotin carboxylase (AccC) and two subunits each of ACCase subunit alpha (AccA) and ACCase subunit beta (AccD). Zn(2+) serves as cofactor.

It localises to the cytoplasm. The catalysed reaction is N(6)-carboxybiotinyl-L-lysyl-[protein] + acetyl-CoA = N(6)-biotinyl-L-lysyl-[protein] + malonyl-CoA. The protein operates within lipid metabolism; malonyl-CoA biosynthesis; malonyl-CoA from acetyl-CoA: step 1/1. In terms of biological role, component of the acetyl coenzyme A carboxylase (ACC) complex. Biotin carboxylase (BC) catalyzes the carboxylation of biotin on its carrier protein (BCCP) and then the CO(2) group is transferred by the transcarboxylase to acetyl-CoA to form malonyl-CoA. The protein is Acetyl-coenzyme A carboxylase carboxyl transferase subunit beta of Thermus thermophilus (strain ATCC BAA-163 / DSM 7039 / HB27).